The following is a 173-amino-acid chain: Co-chaperone protein HscB homolog (173 aa).

One can recognise a J domain in the interval 5-77; it reads CHFALFDLQP…PRRARYLLAI (73 aa).

It belongs to the HscB family. In terms of assembly, interacts with HscA and stimulates its ATPase activity.

In terms of biological role, co-chaperone involved in the maturation of iron-sulfur cluster-containing proteins. Seems to help targeting proteins to be folded toward HscA. In Pseudomonas putida (strain W619), this protein is Co-chaperone protein HscB homolog.